The sequence spans 333 residues: HTH-type transcriptional regulator Cphy_2742 (333 aa).

The HTH lacI-type domain maps to 1–55; that stretch reads MNIYDVSQKAGVSIATVSRVINGNPNVSEKTKQKVLDVMKEIGYTPNVFARGLGL. The H-T-H motif DNA-binding region spans 3–22; it reads IYDVSQKAGVSIATVSRVIN.

The protein resides in the cytoplasm. Involved in control of pectin and galacturonic acid metabolism. Probably represses a comprehensive set of pectin fermentation genes by binding a conserved palindrome at or downstream of their transcription start site to block transcription. In the presence of galacturonic acid may activate transcription of acetate synthesis and other aspects of carbon metabolism. This Lachnoclostridium phytofermentans (strain ATCC 700394 / DSM 18823 / ISDg) (Clostridium phytofermentans) protein is HTH-type transcriptional regulator Cphy_2742.